A 396-amino-acid polypeptide reads, in one-letter code: Acetate kinase (396 aa).

Residue asparagine 6 participates in Mg(2+) binding. Lysine 13 is an ATP binding site. Position 89 (arginine 89) interacts with substrate. The active-site Proton donor/acceptor is aspartate 145. Residues 205-209, 280-282, and 329-333 each bind ATP; these read HLGNG, DMR, and GVGEN. Glutamate 383 provides a ligand contact to Mg(2+).

Belongs to the acetokinase family. As to quaternary structure, homodimer. The cofactor is Mg(2+). It depends on Mn(2+) as a cofactor.

It localises to the cytoplasm. It catalyses the reaction acetate + ATP = acetyl phosphate + ADP. It participates in metabolic intermediate biosynthesis; acetyl-CoA biosynthesis; acetyl-CoA from acetate: step 1/2. Its function is as follows. Catalyzes the formation of acetyl phosphate from acetate and ATP. Can also catalyze the reverse reaction. The sequence is that of Acetate kinase from Mesoplasma florum (strain ATCC 33453 / NBRC 100688 / NCTC 11704 / L1) (Acholeplasma florum).